The sequence spans 226 residues: PKHD-type hydroxylase PST_0995 (226 aa).

In terms of domain architecture, Fe2OG dioxygenase spans 78-178; it reads KVFPPLFNCY…RLASFFWIQS (101 aa). Fe cation is bound by residues His-96, Asp-98, and His-159. 2-oxoglutarate is bound at residue Arg-169.

It depends on Fe(2+) as a cofactor. L-ascorbate is required as a cofactor.

The sequence is that of PKHD-type hydroxylase PST_0995 from Stutzerimonas stutzeri (strain A1501) (Pseudomonas stutzeri).